The sequence spans 69 residues: Cold shock-like protein CspC (69 aa).

Residues 6–66 (GQVKWFNESK…GQKGPAAVNV (61 aa)) enclose the CSD domain.

The protein localises to the cytoplasm. In Escherichia coli O157:H7, this protein is Cold shock-like protein CspC (cspC).